The sequence spans 377 residues: Glutamate 5-kinase (377 aa).

Lys-22 is a binding site for ATP. Residues Ser-62, Asp-149, and Asn-161 each coordinate substrate. Residues 181-182 and 223-229 contribute to the ATP site; these read TD and TGGMVTK. The region spanning 285–359 is the PUA domain; the sequence is QGTLVADSGA…GRNTAQLKRF (75 aa).

It belongs to the glutamate 5-kinase family.

It localises to the cytoplasm. The catalysed reaction is L-glutamate + ATP = L-glutamyl 5-phosphate + ADP. Its pathway is amino-acid biosynthesis; L-proline biosynthesis; L-glutamate 5-semialdehyde from L-glutamate: step 1/2. Its function is as follows. Catalyzes the transfer of a phosphate group to glutamate to form L-glutamate 5-phosphate. The polypeptide is Glutamate 5-kinase (Bifidobacterium adolescentis (strain ATCC 15703 / DSM 20083 / NCTC 11814 / E194a)).